A 236-amino-acid chain; its full sequence is Bidirectional sugar transporter SWEET2 (236 aa).

Over 1–15 (MDVFAFNASLSMCKD) the chain is Extracellular. N-linked (GlcNAc...) asparagine glycosylation occurs at N7. A helical transmembrane segment spans residues 16–36 (VAGIAGNIFAFGLFVSPMPTF). The 86-residue stretch at 18–103 (GIAGNIFAFG…ILFIMHTDKK (86 aa)) folds into the MtN3/slv 1 domain. At 37–50 (RRIMRNKSTEQFSG) the chain is on the cytoplasmic side. The chain crosses the membrane as a helical span at residues 51-71 (LPYIYALLNCLICLWYGTPFI). The Extracellular segment spans residues 72 to 76 (SHSNA). A helical membrane pass occupies residues 77–97 (MLMTVNSVGATFQLCYIILFI). Topologically, residues 98–108 (MHTDKKNKMKM) are cytoplasmic. The chain crosses the membrane as a helical span at residues 109-129 (LGLLFVVFAVVGVIVAGSLQI). Over 130–137 (PDQLTRWY) the chain is Extracellular. Residues 138 to 158 (FVGFLSCGSLVSMFASPLFVI) traverse the membrane as a helical segment. In terms of domain architecture, MtN3/slv 2 spans 138–221 (FVGFLSCGSL…LALYCYYHRN (84 aa)). At 159 to 170 (NLVIRTKSVEFM) the chain is on the cytoplasmic side. The helical transmembrane segment at 171-191 (PFYLSLSTFLMSASFLLYGLF) threads the bilayer. At 192–194 (NSD) the chain is on the extracellular side. A helical membrane pass occupies residues 195-215 (AFVYTPNGIGTILGIVQLALY). Over 216–236 (CYYHRNSIEEETKEPLIVSYV) the chain is Cytoplasmic.

The protein belongs to the SWEET sugar transporter family. As to quaternary structure, forms heterooligomers with SWEET17.

The protein localises to the cell membrane. Functionally, mediates both low-affinity uptake and efflux of sugar across the plasma membrane. The sequence is that of Bidirectional sugar transporter SWEET2 from Arabidopsis thaliana (Mouse-ear cress).